The chain runs to 564 residues: Potassium-transporting ATPase potassium-binding subunit (564 aa).

Transmembrane regions (helical) follow at residues 4–24 (YDFA…PWLG), 67–87 (TLAL…VLLL), 135–155 (LGLT…LVVL), 179–199 (LYGL…QGVP), 258–278 (FEVA…GHYV), 286–306 (AILA…LWSE), 382–402 (AGLY…GLMI), 420–440 (LLVA…AIAA), 487–507 (LMIG…ILAL), and 533–553 (GLLL…TLAL).

Belongs to the KdpA family. In terms of assembly, the system is composed of three essential subunits: KdpA, KdpB and KdpC.

It is found in the cell inner membrane. Its function is as follows. Part of the high-affinity ATP-driven potassium transport (or Kdp) system, which catalyzes the hydrolysis of ATP coupled with the electrogenic transport of potassium into the cytoplasm. This subunit binds the periplasmic potassium ions and delivers the ions to the membrane domain of KdpB through an intramembrane tunnel. This chain is Potassium-transporting ATPase potassium-binding subunit, found in Pseudomonas putida (strain ATCC 47054 / DSM 6125 / CFBP 8728 / NCIMB 11950 / KT2440).